The sequence spans 223 residues: Probable 3-beta-hydroxysteroid-Delta(8),Delta(7)-isomerase (223 aa).

4 helical membrane passes run Ile-28–Gly-48, Leu-58–Phe-78, Val-115–Ala-135, and Phe-175–Ile-195. The 143-residue stretch at Leu-54–Ser-196 folds into the EXPERA domain.

Belongs to the EBP family.

It is found in the endoplasmic reticulum membrane. The catalysed reaction is lathosterol = 5alpha-cholest-8-en-3beta-ol. It participates in steroid biosynthesis; sterol biosynthesis. In terms of biological role, catalyzes the conversion of Delta(8)-sterols to their corresponding Delta(7)-isomers. The polypeptide is Probable 3-beta-hydroxysteroid-Delta(8),Delta(7)-isomerase (Arabidopsis thaliana (Mouse-ear cress)).